Here is a 438-residue protein sequence, read N- to C-terminus: Phosphatidylserine decarboxylase proenzyme 1, mitochondrial (438 aa).

The N-terminal 21 residues, 1-21 (MRRFRVWPPSPSPWPLLASRP), are a transit peptide targeting the mitochondrion. The Mitochondrial matrix portion of the chain corresponds to 22–48 (CPHSHHHRSPFHASANSGARQGNFILP). A helical membrane pass occupies residues 49 to 67 (GATAATLVMFGILHARRMY). The Mitochondrial intermembrane portion of the chain corresponds to 68–438 (EDQKVVERKE…EAIGRWTSRE (371 aa)). Active-site charge relay system; for autoendoproteolytic cleavage activity residues include aspartate 173, histidine 273, and serine 387. Serine 387 acts as the Schiff-base intermediate with substrate; via pyruvic acid; for decarboxylase activity in catalysis. Residue serine 387 is modified to Pyruvic acid (Ser); by autocatalysis.

The protein belongs to the phosphatidylserine decarboxylase family. PSD-B subfamily. Eukaryotic type I sub-subfamily. In terms of assembly, heterodimer of a large membrane-associated beta subunit and a small pyruvoyl-containing alpha subunit. Pyruvate is required as a cofactor. Is synthesized initially as an inactive proenzyme. Formation of the active enzyme involves a self-maturation process in which the active site pyruvoyl group is generated from an internal serine residue via an autocatalytic post-translational modification. Two non-identical subunits are generated from the proenzyme in this reaction, and the pyruvate is formed at the N-terminus of the alpha chain, which is derived from the carboxyl end of the proenzyme. The autoendoproteolytic cleavage occurs by a canonical serine protease mechanism, in which the side chain hydroxyl group of the serine supplies its oxygen atom to form the C-terminus of the beta chain, while the remainder of the serine residue undergoes an oxidative deamination to produce ammonia and the pyruvoyl prosthetic group on the alpha chain. During this reaction, the Ser that is part of the protease active site of the proenzyme becomes the pyruvoyl prosthetic group, which constitutes an essential element of the active site of the mature decarboxylase.

The protein resides in the mitochondrion inner membrane. It carries out the reaction a 1,2-diacyl-sn-glycero-3-phospho-L-serine + H(+) = a 1,2-diacyl-sn-glycero-3-phosphoethanolamine + CO2. It functions in the pathway phospholipid metabolism; phosphatidylethanolamine biosynthesis; phosphatidylethanolamine from CDP-diacylglycerol: step 2/2. In terms of biological role, catalyzes the formation of phosphatidylethanolamine (PtdEtn) from phosphatidylserine (PtdSer). Plays a central role in phospholipid metabolism and in the interorganelle trafficking of phosphatidylserine. The chain is Phosphatidylserine decarboxylase proenzyme 1, mitochondrial (PSD1) from Oryza sativa subsp. japonica (Rice).